The sequence spans 984 residues: Ephrin type-B receptor 1 (984 aa).

A signal peptide spans 1–17; that stretch reads MALDCLLLFLLASAVAA. The Extracellular segment spans residues 18–540; it reads MEETLMDTRT…YKSELREQLP (523 aa). The 183-residue stretch at 19-201 folds into the Eph LBD domain; the sequence is EETLMDTRTA…FFKKCPSIVQ (183 aa). Fibronectin type-III domains follow at residues 322 to 432 and 433 to 528; these read VPSG…TNQA and APST…TLTD. Asn334, Asn426, and Asn480 each carry an N-linked (GlcNAc...) asparagine glycan. A helical membrane pass occupies residues 541–563; it reads LIAGSAAAGVVFVVSLVAISIVC. Topologically, residues 564–984 are cytoplasmic; the sequence is SRKRAYSKEA…QMNQSPSVMA (421 aa). Residue Tyr600 is modified to Phosphotyrosine. Residues 619–882 enclose the Protein kinase domain; it reads VKIEEVIGAG…EIVNTLDKMI (264 aa). Residues 625 to 633 and Lys651 contribute to the ATP site; that span reads IGAGEFGEV. Catalysis depends on Asp744, which acts as the Proton acceptor. The SAM domain maps to 911-975; that stretch reads TAFTTVDDWL…LSSIHSMRVQ (65 aa). Tyr928 is subject to Phosphotyrosine; by autocatalysis. The PDZ-binding motif lies at 982 to 984; the sequence is VMA.

It belongs to the protein kinase superfamily. Tyr protein kinase family. Ephrin receptor subfamily. Heterotetramer upon binding of the ligand. The heterotetramer is composed of an ephrin dimer and a receptor dimer. Oligomerization is probably required to induce biological responses. Interacts with EPHB6; transphosphorylates EPHB6 to form an active signaling complex. Interacts with PICK1. Interacts (through Tyr-594) with NCK1 (via SH2 domain); activates the JUN cascade to regulate cell adhesion. The ligand-activated form interacts (through Tyr-928) with GRB7 and GRB10 (via SH2 domains). The ligand-activated form interacts (residues within the catalytic domain) with GRB2 (via SH2 domain). Interacts with GRB2, SHC1 and SRC; activates the MAPK/ERK cascade to regulate cell migration. Interacts with CBL; regulates receptor degradation through ubiquitination. Interacts with ACP1. Post-translationally, phosphorylated. Autophosphorylation is stimulated by the ligand EFNB1. Required for interaction with SH2 domain-containing interactors, for activation of the MAPK/ERK and JUN signaling cascades and for ubiquitination by CBL. Ubiquitinated; (EFNB1)ligand-induced poly- and/or multi-ubiquitination by CBL is regulated by SRC and leads to lysosomal degradation. Expressed in neural stem and progenitor cells in the dentate gyrus. Expressed in myogenic progenitor cells.

It localises to the cell membrane. It is found in the early endosome membrane. The protein resides in the cell projection. Its subcellular location is the dendrite. It carries out the reaction L-tyrosyl-[protein] + ATP = O-phospho-L-tyrosyl-[protein] + ADP + H(+). Receptor tyrosine kinase which binds promiscuously transmembrane ephrin-B family ligands residing on adjacent cells, leading to contact-dependent bidirectional signaling into neighboring cells. The signaling pathway downstream of the receptor is referred to as forward signaling while the signaling pathway downstream of the ephrin ligand is referred to as reverse signaling. Cognate/functional ephrin ligands for this receptor include EFNB1, EFNB2 and EFNB3. During nervous system development, regulates retinal axon guidance redirecting ipsilaterally ventrotemporal retinal ganglion cells axons at the optic chiasm midline. This probably requires repulsive interaction with EFNB2. In the adult nervous system together with EFNB3, regulates chemotaxis, proliferation and polarity of the hippocampus neural progenitors. In addition to its role in axon guidance also plays an important redundant role with other ephrin-B receptors in development and maturation of dendritic spines and synapse formation. May also regulate angiogenesis. More generally, may play a role in targeted cell migration and adhesion. Upon activation by EFNB1 and probably other ephrin-B ligands activates the MAPK/ERK and the JNK signaling cascades to regulate cell migration and adhesion respectively. Involved in the maintenance of the pool of satellite cells (muscle stem cells) by promoting their self-renewal and reducing their activation and differentiation. This is Ephrin type-B receptor 1 (Ephb1) from Mus musculus (Mouse).